Here is a 539-residue protein sequence, read N- to C-terminus: Interleukin-2 receptor subunit beta (539 aa).

An N-terminal signal peptide occupies residues 1 to 26 (MATIALPWSLSLYVFLLLLATPWASA). Residues 27 to 240 (AVKNCSHLEC…RTRPADPMKE (214 aa)) are Extracellular-facing. Asn30, Asn43, Asn55, and Asn71 each carry an N-linked (GlcNAc...) asparagine glycan. A disulfide bond links Cys36 and Cys46. Cys74 and Cys86 form a disulfide bridge. The region spanning 135–235 (APHSLQVLHI…QPLTFRTRPA (101 aa)) is the Fibronectin type-III domain. N-linked (GlcNAc...) asparagine glycosylation is found at Asn150 and Asn216. The WSXWS motif motif lies at 221–225 (WSPWS). A helical membrane pass occupies residues 241–268 (ILPMSWLRYLLLVLGCFSGFFSCVYILV). The Cytoplasmic segment spans residues 269-539 (KCRYLGPWLK…LQAQDSVHLI (271 aa)). Residues 281–289 (LKCHIPDPS) carry the Box 1 motif motif. 3 disordered regions span residues 395-419 (VEED…GEQD), 440-465 (PNTA…LPSL), and 477-516 (LERM…QGPI).

It belongs to the type I cytokine receptor family. Type 4 subfamily. In terms of assembly, non-covalent dimer of an alpha and a beta subunit. IL2R exists in 3 different forms: a high affinity dimer, an intermediate affinity monomer (beta subunit), and a low affinity monomer (alpha subunit). The high and intermediate affinity forms also associate with a gamma subunit. Interacts with SHB upon interleukin stimulation.

It localises to the cell membrane. The protein resides in the cell surface. Its function is as follows. Receptor for interleukin-2. This beta subunit is involved in receptor mediated endocytosis and transduces the mitogenic signals of IL2. Probably in association with IL15RA, involved in the stimulation of neutrophil phagocytosis by IL15. This is Interleukin-2 receptor subunit beta (Il2rb) from Mus musculus (Mouse).